A 396-amino-acid polypeptide reads, in one-letter code: Elongation factor Tu (396 aa).

The tr-type G domain maps to 10-206; sequence KPHVNVGTIG…ALDTYIPTPE (197 aa). Residues 19–26 form a G1 region; sequence GHVDHGKT. 19 to 26 is a binding site for GTP; the sequence is GHVDHGKT. Residue Thr-26 coordinates Mg(2+). The tract at residues 60-64 is G2; it reads GITIN. Residues 81-84 are G3; that stretch reads DCPG. GTP contacts are provided by residues 81 to 85 and 136 to 139; these read DCPGH and NKAD. A G4 region spans residues 136-139; it reads NKAD. Residues 174–176 are G5; the sequence is SAK.

It belongs to the TRAFAC class translation factor GTPase superfamily. Classic translation factor GTPase family. EF-Tu/EF-1A subfamily. As to quaternary structure, monomer.

It localises to the cytoplasm. The catalysed reaction is GTP + H2O = GDP + phosphate + H(+). GTP hydrolase that promotes the GTP-dependent binding of aminoacyl-tRNA to the A-site of ribosomes during protein biosynthesis. The chain is Elongation factor Tu from Bordetella avium (strain 197N).